The primary structure comprises 575 residues: Pre-hexon-linking protein IIIa (575 aa).

The segment at Met-1 to Asn-95 is peripentonal hexon-tethering domain. The tract at residues Ala-129–Gly-243 is binding to hexon-linking protein. Phosphoserine; by host is present on Ser-497. A propeptide spanning residues Gly-515–Tyr-575 is cleaved from the precursor. Residues Pro-525–Gly-549 form a disordered region.

This sequence belongs to the adenoviridae hexon-linking protein IIIa family. Interacts with hexon proteins; this interaction tethers the peripentonal hexons to hexons situated in the facet. Interacts with the penton protein (via N-terminus). Interacts with packaging protein 3; this interaction is required to promote correct genome packaging. In terms of processing, cleaved near the C-terminus by the viral protease during virion maturation to form the mature protein.

It is found in the virion. The protein localises to the host nucleus. Structural component of the virion that acts as a cement protein on the capsid exterior which mediates the interactions between the hexons, including the peripentonal hexons, and reaches all the way to the penton vertices. Two hexon linking proteins IIIa, one from each facet, stabilize the unique edge interface between a pair of facets. As the virus enters the host cell, hexon linking proteins IIIa are shed concomitant with virion acidification in the endosome. During virus assembly, seems to play a role in the serotype specificity of the packaging of viral DNA via its interaction with packaging protein 3. This chain is Pre-hexon-linking protein IIIa, found in Galliformes (FAdV-1).